The chain runs to 508 residues: Light-independent protochlorophyllide reductase subunit B (508 aa).

Aspartate 36 serves as a coordination point for [4Fe-4S] cluster. The Proton donor role is filled by aspartate 294. Substrate is bound at residue 429–430 (GM).

This sequence belongs to the ChlB/BchB/BchZ family. In terms of assembly, protochlorophyllide reductase is composed of three subunits; ChlL, ChlN and ChlB. Forms a heterotetramer of two ChlB and two ChlN subunits. [4Fe-4S] cluster serves as cofactor.

Its subcellular location is the plastid. It is found in the chloroplast. The catalysed reaction is chlorophyllide a + oxidized 2[4Fe-4S]-[ferredoxin] + 2 ADP + 2 phosphate = protochlorophyllide a + reduced 2[4Fe-4S]-[ferredoxin] + 2 ATP + 2 H2O. The protein operates within porphyrin-containing compound metabolism; chlorophyll biosynthesis (light-independent). Functionally, component of the dark-operative protochlorophyllide reductase (DPOR) that uses Mg-ATP and reduced ferredoxin to reduce ring D of protochlorophyllide (Pchlide) to form chlorophyllide a (Chlide). This reaction is light-independent. The NB-protein (ChlN-ChlB) is the catalytic component of the complex. The polypeptide is Light-independent protochlorophyllide reductase subunit B (Pyropia yezoensis (Susabi-nori)).